We begin with the raw amino-acid sequence, 179 residues long: ATP synthase subunit delta (179 aa).

The protein belongs to the ATPase delta chain family. F-type ATPases have 2 components, F(1) - the catalytic core - and F(0) - the membrane proton channel. F(1) has five subunits: alpha(3), beta(3), gamma(1), delta(1), epsilon(1). F(0) has three main subunits: a(1), b(2) and c(10-14). The alpha and beta chains form an alternating ring which encloses part of the gamma chain. F(1) is attached to F(0) by a central stalk formed by the gamma and epsilon chains, while a peripheral stalk is formed by the delta and b chains.

It is found in the cell inner membrane. Functionally, f(1)F(0) ATP synthase produces ATP from ADP in the presence of a proton or sodium gradient. F-type ATPases consist of two structural domains, F(1) containing the extramembraneous catalytic core and F(0) containing the membrane proton channel, linked together by a central stalk and a peripheral stalk. During catalysis, ATP synthesis in the catalytic domain of F(1) is coupled via a rotary mechanism of the central stalk subunits to proton translocation. In terms of biological role, this protein is part of the stalk that links CF(0) to CF(1). It either transmits conformational changes from CF(0) to CF(1) or is implicated in proton conduction. This chain is ATP synthase subunit delta, found in Burkholderia multivorans (strain ATCC 17616 / 249).